A 585-amino-acid polypeptide reads, in one-letter code: Arginine--tRNA ligase (585 aa).

The 'HIGH' region motif lies at 131–141 (ANPTGPMHVGH).

Belongs to the class-I aminoacyl-tRNA synthetase family. As to quaternary structure, monomer.

It is found in the cytoplasm. The enzyme catalyses tRNA(Arg) + L-arginine + ATP = L-arginyl-tRNA(Arg) + AMP + diphosphate. The chain is Arginine--tRNA ligase from Brucella ovis (strain ATCC 25840 / 63/290 / NCTC 10512).